The sequence spans 775 residues: DNA polymerase (775 aa).

This sequence belongs to the DNA polymerase type-B family. In terms of assembly, monomer.

It carries out the reaction DNA(n) + a 2'-deoxyribonucleoside 5'-triphosphate = DNA(n+1) + diphosphate. In addition to polymerase activity, this DNA polymerase exhibits 3' to 5' exonuclease activity. This chain is DNA polymerase (pol), found in Pyrococcus glycovorans.